A 402-amino-acid polypeptide reads, in one-letter code: Phosphoglycerate kinase (402 aa).

Substrate-binding positions include 29-31 (DFN), Arg-45, 69-72 (HLGR), Arg-125, and Arg-158. ATP is bound by residues Lys-209, Glu-331, and 357 to 360 (GGDT).

Belongs to the phosphoglycerate kinase family.

It localises to the cytoplasm. The catalysed reaction is (2R)-3-phosphoglycerate + ATP = (2R)-3-phospho-glyceroyl phosphate + ADP. Its pathway is carbohydrate degradation; glycolysis; pyruvate from D-glyceraldehyde 3-phosphate: step 2/5. The protein is Phosphoglycerate kinase (pgk) of Helicobacter pylori (strain J99 / ATCC 700824) (Campylobacter pylori J99).